The sequence spans 273 residues: Shikimate dehydrogenase (NADP(+)) (273 aa).

Shikimate-binding positions include 14–16 and Thr59; that span reads SLS. Lys63 (proton acceptor) is an active-site residue. 2 residues coordinate shikimate: Asn84 and Asp99. NADP(+) is bound by residues 122–126 and Met212; that span reads GAGGA. Tyr214 is a shikimate binding site. NADP(+) is bound at residue Gly235.

It belongs to the shikimate dehydrogenase family. In terms of assembly, homodimer.

It catalyses the reaction shikimate + NADP(+) = 3-dehydroshikimate + NADPH + H(+). It functions in the pathway metabolic intermediate biosynthesis; chorismate biosynthesis; chorismate from D-erythrose 4-phosphate and phosphoenolpyruvate: step 4/7. In terms of biological role, involved in the biosynthesis of the chorismate, which leads to the biosynthesis of aromatic amino acids. Catalyzes the reversible NADPH linked reduction of 3-dehydroshikimate (DHSA) to yield shikimate (SA). In Aeropyrum pernix (strain ATCC 700893 / DSM 11879 / JCM 9820 / NBRC 100138 / K1), this protein is Shikimate dehydrogenase (NADP(+)).